A 313-amino-acid chain; its full sequence is MNTFSQVWVFSDTPSRLPELMNGAQALANQINTFVLNDADGVQAIQLGANHVWKLNGKPDDRMIEDYAGVMADTIRQHGADGLVLLPNTRRGKLLAAKLGYRLKAAVSNDASTISVQDGKATVKHMVYGGLAIGEERIATPYAVLTISSGTFDAAQPDASRTGETHTVEWQAPAVAITRTATQARQSNSVDLDKARLVVSVGRGIGSKENIALAEQLCKAIGAELACSRPVAENEKWMEHERYVGISNLMLKPELYLAVGISGQIQHMVGANASQTIFAINKDKNAPIFQYADYGIVGDAVKILPALTAALAR.

FAD is bound at residue 255–283 (LYLAVGISGQIQHMVGANASQTIFAINKD).

It belongs to the ETF alpha-subunit/FixB family. As to quaternary structure, heterodimer of FixA and FixB.

Its pathway is amine and polyamine metabolism; carnitine metabolism. Its function is as follows. Required for anaerobic carnitine reduction. May bring reductant to CaiA. This chain is Protein FixB, found in Escherichia coli (strain 55989 / EAEC).